We begin with the raw amino-acid sequence, 642 residues long: Uromodulin (642 aa).

Positions 1-26 (MGQLSSLTSVWMVVVVTSWVIIAANI) are cleaved as a signal peptide. Residues 32 to 64 (RSCSECHSNATCMEDGMVTTCSCLVGFTGSGFE) form the EGF-like 1 domain. 21 cysteine pairs are disulfide-bonded: cysteine 34–cysteine 43, cysteine 37–cysteine 52, cysteine 54–cysteine 65, cysteine 71–cysteine 85, cysteine 79–cysteine 94, cysteine 96–cysteine 108, cysteine 114–cysteine 128, cysteine 122–cysteine 137, cysteine 139–cysteine 150, cysteine 152–cysteine 163, cysteine 157–cysteine 172, cysteine 176–cysteine 269, cysteine 197–cysteine 284, cysteine 219–cysteine 257, cysteine 225–cysteine 289, cysteine 250–cysteine 258, cysteine 299–cysteine 308, cysteine 302–cysteine 317, cysteine 319–cysteine 348, cysteine 336–cysteine 426, and cysteine 367–cysteine 390. A glycan (N-linked (GlcNAc...) asparagine) is linked at asparagine 40. The EGF-like 2; calcium-binding domain maps to 67 to 109 (DLDECAIPGAHNCSEGSSCMNTLGSYLCTCPDGFRLTPGLGCI). Asparagine 78 is a glycosylation site (N-linked (GlcNAc...) asparagine). Residues 110–151 (DVDECSEPGLSRCHALATCINNKGNYSCVCPAGYRGDGQHCE) form the EGF-like 3; calcium-binding domain. The N-linked (GlcNAc...) asparagine glycan is linked to asparagine 134. Positions 152–173 (CSPGSCGPGLDCVPVGDALVCA) are beta hairpin. Residues 174-293 (DPCQEHRILD…CYLAYCTDPT (120 aa)) form a D10C region. Residues asparagine 234 and asparagine 246 are each glycosylated (N-linked (GlcNAc...) asparagine). Residue asparagine 277 is glycosylated (N-linked (GlcNAc...) asparagine). Residues 294-325 (SVLGTCEECSVEEDCKSHDGMWSCQCKQDFNV) form the EGF-like 4 domain. N-linked (GlcNAc...) asparagine glycosylation occurs at asparagine 324. Residues 335–430 (ECRPNDIKVS…KINFECSYPL (96 aa)) form a ZP-N region. Residues 335–590 (ECRPNDIKVS…PTCSGTRFRS (256 aa)) enclose the ZP domain. Asparagine 397 and asparagine 448 each carry an N-linked (GlcNAc...) asparagine glycan. A flexible ZP-N/ZP-C linker; important for secretion and polymerization into filaments region spans residues 431–454 (DMKVSLETSLQPIVSSLNISVGGT). The tract at residues 455–465 (GMFTVRMALFQ) is internal hydrophobic patch (IHP). Residues 455–590 (GMFTVRMALF…PTCSGTRFRS (136 aa)) are ZP-C. 3 disulfide bridges follow: cysteine 507–cysteine 567, cysteine 528–cysteine 583, and cysteine 572–cysteine 579. N-linked (GlcNAc...) asparagine glycosylation is present at asparagine 514. The interval 587 to 590 (RFRS) is essential for cleavage by HPN. The tract at residues 599–607 (VLNLGPITR) is external hydrophobic patch (EHP); regulates polymerization into filaments. Serine 620 carries GPI-anchor amidated serine lipidation. Positions 621–642 (SLGFLKVCLPLLLSATLTLMFQ) are cleaved as a propeptide — removed in mature form.

As to quaternary structure, homodimer that then polymerizes into long filaments. The filaments can additionally assemble laterally to form a sheet. The filaments consist of a zigzag-shaped backbone with laterally protruding arms which interact with bacterial adhesin fimH. Two fimH molecules can bind to a single UMOD monomer. N-glycosylated. Post-translationally, proteolytically cleaved at a conserved C-terminal proteolytic cleavage site to generate the secreted form found in urine. This cleavage is catalyzed by HPN. As to expression, detected in kidney and pancreas.

The protein resides in the apical cell membrane. The protein localises to the basolateral cell membrane. It localises to the cell projection. Its subcellular location is the cilium membrane. It is found in the secreted. Its function is as follows. Functions in biogenesis and organization of the apical membrane of epithelial cells of the thick ascending limb of Henle's loop (TALH), where it promotes formation of complex filamentous gel-like structure that may play a role in the water barrier permeability. May serve as a receptor for binding and endocytosis of cytokines (IL-1, IL-2) and TNF. Facilitates neutrophil migration across renal epithelia. Functionally, in the urine, may contribute to colloid osmotic pressure, retards passage of positively charged electrolytes, and inhibits formation of liquid containing supersaturated salts and subsequent formation of salt crystals. Protects against urinary tract infections by binding to type 1 fimbriated E.coli. Binds to bacterial adhesin fimH which mediates the stable formation of bacterial aggregates, prevents the binding of E.coli to uroplakins UPK1A and UPK1B which act as urothelial receptors for type I fimbriae, and allows for pathogen clearance through micturation. Also promotes aggregation of other bacteria including K.pneumoniae, P.aeruginosa and S.mitis and so may also protect against other uropathogens. The protein is Uromodulin (UMOD) of Canis lupus familiaris (Dog).